An 84-amino-acid polypeptide reads, in one-letter code: SPbeta prophage-derived uncharacterized protein YomY (84 aa).

The chain is SPbeta prophage-derived uncharacterized protein YomY (yomY) from Bacillus subtilis (strain 168).